The primary structure comprises 536 residues: Bifunctional purine biosynthesis protein PurH (536 aa).

The 151-residue stretch at Ile-8–Thr-158 folds into the MGS-like domain.

It belongs to the PurH family.

The enzyme catalyses (6R)-10-formyltetrahydrofolate + 5-amino-1-(5-phospho-beta-D-ribosyl)imidazole-4-carboxamide = 5-formamido-1-(5-phospho-D-ribosyl)imidazole-4-carboxamide + (6S)-5,6,7,8-tetrahydrofolate. The catalysed reaction is IMP + H2O = 5-formamido-1-(5-phospho-D-ribosyl)imidazole-4-carboxamide. The protein operates within purine metabolism; IMP biosynthesis via de novo pathway; 5-formamido-1-(5-phospho-D-ribosyl)imidazole-4-carboxamide from 5-amino-1-(5-phospho-D-ribosyl)imidazole-4-carboxamide (10-formyl THF route): step 1/1. It functions in the pathway purine metabolism; IMP biosynthesis via de novo pathway; IMP from 5-formamido-1-(5-phospho-D-ribosyl)imidazole-4-carboxamide: step 1/1. The sequence is that of Bifunctional purine biosynthesis protein PurH from Rhizobium meliloti (strain 1021) (Ensifer meliloti).